We begin with the raw amino-acid sequence, 247 residues long: Diglucosylglycerate octanoyltransferase (247 aa).

Belongs to the OctT acyltransferase family. As to quaternary structure, homotetramer.

The catalysed reaction is (2R)-2-O-[alpha-D-glucopyranosyl-(1-&gt;6)-alpha-D-glucopyranosyl]-glycerate + octanoyl-CoA = (2R)-2-O-[6-O-octanoyl-alpha-D-glucopyranosyl-(1-&gt;6)-alpha-D-glucopyranosyl]-glycerate + CoA. Its function is as follows. Sugar octanoyltransferase likely involved in the biosynthesis of mycobacterial methylglucose lipopolysaccharide (MGLP). Catalyzes the transfer of an octanoyl group from octanoyl-CoA to the C6 OH of the second glucose in diglucosylglycerate (DGG). DGG is the preferred acceptor, but to a lesser extent, GG (glucosylglycerate) can also be used as substrate. DGG and GG are the two earliest intermediates in MGLP biosynthesis. The protein is Diglucosylglycerate octanoyltransferase of Mycobacterium tuberculosis (strain ATCC 25618 / H37Rv).